A 301-amino-acid polypeptide reads, in one-letter code: MSETPDSPRPVTPGSQASFGTYGGRPVSFVRRGTRLQGRRQAAWEEHAERWAIQVPRHVANTSVHPDYTFDAEAVFGRKAPLIVEIGSGLGDAVVHAAEQNPDKDFLAVEVYTPGLANTIIKINSRGLTNVRVVEANAPEVLESMLPEGSVSELWVFFPDPWHKARHHKRRLIQPAFASVAAKALVKGGYWRIATDWSNYAVHVREVLTGSTEFENMHEGERSGEESPLTQVWQSGVESVVGGAPVREGRAPVSTEHTGPNEGVDEEGGWAPRFDGRIRTSFENKAHEAGRMIFDLTYRKR.

Residues 1-26 form a disordered region; that stretch reads MSETPDSPRPVTPGSQASFGTYGGRP. Positions 85, 110, 137, and 160 each coordinate S-adenosyl-L-methionine. Residue Asp-160 is part of the active site. Residues Lys-164 and Asp-196 each coordinate substrate. The segment at 244-270 is disordered; it reads APVREGRAPVSTEHTGPNEGVDEEGGW. Residue 280-283 coordinates substrate; the sequence is TSFE.

It belongs to the class I-like SAM-binding methyltransferase superfamily. TrmB family.

The enzyme catalyses guanosine(46) in tRNA + S-adenosyl-L-methionine = N(7)-methylguanosine(46) in tRNA + S-adenosyl-L-homocysteine. The protein operates within tRNA modification; N(7)-methylguanine-tRNA biosynthesis. In terms of biological role, catalyzes the formation of N(7)-methylguanine at position 46 (m7G46) in tRNA. This chain is tRNA (guanine-N(7)-)-methyltransferase, found in Paenarthrobacter aurescens (strain TC1).